The primary structure comprises 203 residues: Glycerol-3-phosphate acyltransferase (203 aa).

5 helical membrane-spanning segments follow: residues 4-24 (IAPG…AILV), 56-76 (VAVL…AYML), 80-100 (PFWL…PVFF), 112-132 (FGAI…TWLL), and 138-158 (GYSS…VWWF).

Belongs to the PlsY family. In terms of assembly, probably interacts with PlsX.

It is found in the cell inner membrane. The catalysed reaction is an acyl phosphate + sn-glycerol 3-phosphate = a 1-acyl-sn-glycero-3-phosphate + phosphate. It participates in lipid metabolism; phospholipid metabolism. Functionally, catalyzes the transfer of an acyl group from acyl-phosphate (acyl-PO(4)) to glycerol-3-phosphate (G3P) to form lysophosphatidic acid (LPA). This enzyme utilizes acyl-phosphate as fatty acyl donor, but not acyl-CoA or acyl-ACP. This is Glycerol-3-phosphate acyltransferase from Enterobacter sp. (strain 638).